We begin with the raw amino-acid sequence, 522 residues long: Ribonuclease Y (522 aa).

Residues 7–23 (SGSSAAVISGLVGFYIS) form a helical membrane-spanning segment. A KH domain is found at 212–278 (LTNLVHLNDD…TKTLELLIQD (67 aa)). Residues 338–431 (ALSHTLEVAH…VCAADALSAA (94 aa)) enclose the HD domain.

Belongs to the RNase Y family.

The protein resides in the cell membrane. In terms of biological role, endoribonuclease that initiates mRNA decay. In Sulfurimonas denitrificans (strain ATCC 33889 / DSM 1251) (Thiomicrospira denitrificans (strain ATCC 33889 / DSM 1251)), this protein is Ribonuclease Y.